An 83-amino-acid polypeptide reads, in one-letter code: Cytochrome b559 subunit alpha (83 aa).

A helical membrane pass occupies residues 21-35; it reads VIHSITIPSLFIAGW. Residue His23 coordinates heme.

The protein belongs to the PsbE/PsbF family. In terms of assembly, heterodimer of an alpha subunit and a beta subunit. PSII is composed of 1 copy each of membrane proteins PsbA, PsbB, PsbC, PsbD, PsbE, PsbF, PsbH, PsbI, PsbJ, PsbK, PsbL, PsbM, PsbT, PsbX, PsbY, PsbZ, Psb30/Ycf12, at least 3 peripheral proteins of the oxygen-evolving complex and a large number of cofactors. It forms dimeric complexes. Heme b serves as cofactor.

It localises to the plastid. It is found in the chloroplast thylakoid membrane. This b-type cytochrome is tightly associated with the reaction center of photosystem II (PSII). PSII is a light-driven water:plastoquinone oxidoreductase that uses light energy to abstract electrons from H(2)O, generating O(2) and a proton gradient subsequently used for ATP formation. It consists of a core antenna complex that captures photons, and an electron transfer chain that converts photonic excitation into a charge separation. The sequence is that of Cytochrome b559 subunit alpha from Acorus calamus (Sweet flag).